A 70-amino-acid chain; its full sequence is Large ribosomal subunit protein eL38 (70 aa).

It belongs to the eukaryotic ribosomal protein eL38 family.

In Bombyx mori (Silk moth), this protein is Large ribosomal subunit protein eL38 (RpL38).